We begin with the raw amino-acid sequence, 519 residues long: Chaperone SurA (519 aa).

The first 31 residues, 1-31 (MMRSLHSLRRMSGTVLALMLAAGLPLSAAQA), serve as a signal peptide directing secretion. Composition is skewed to low complexity over residues 31 to 45 (AQPAKPAPKGDQKPA) and 197 to 207 (PAAAQATRAPA). 2 disordered regions span residues 31-50 (AQPAKPAPKGDQKPATPAPS) and 196-221 (NPAAAQATRAPAPQQPQPQPRQPAQS). In terms of domain architecture, PpiC 1 spans 223–324 (PAMLVLAQIL…NGFHILKVVD (102 aa)). The tract at residues 328–361 (GGQPAQAARPAPAPAPQQPSSFQEGPSVAAPQGP) is disordered. The region spanning 364-463 (VTQTHARHIL…FGWHLIQVLE (100 aa)) is the PpiC 2 domain.

Its subcellular location is the periplasm. It catalyses the reaction [protein]-peptidylproline (omega=180) = [protein]-peptidylproline (omega=0). Chaperone involved in the correct folding and assembly of outer membrane proteins. Recognizes specific patterns of aromatic residues and the orientation of their side chains, which are found more frequently in integral outer membrane proteins. May act in both early periplasmic and late outer membrane-associated steps of protein maturation. This chain is Chaperone SurA, found in Bordetella pertussis (strain Tohama I / ATCC BAA-589 / NCTC 13251).